A 112-amino-acid chain; its full sequence is uncharacterized protein (112 aa).

Over residues 1-11 (MAESVASSESL) the composition is skewed to polar residues. Residues 1-32 (MAESVASSESLPQMKPEEPESKKSPSREAIPK) form a disordered region. Residues 15–31 (KPEEPESKKSPSREAIP) are compositionally biased toward basic and acidic residues. Residues 81-101 (VVFIFMIAIMSMLVIGLVVCG) form a helical membrane-spanning segment.

It is found in the membrane. This is an uncharacterized protein from Encephalitozoon cuniculi (strain GB-M1) (Microsporidian parasite).